A 247-amino-acid polypeptide reads, in one-letter code: uncharacterized protein (247 aa).

This is an uncharacterized protein from Archaeoglobus fulgidus (strain ATCC 49558 / DSM 4304 / JCM 9628 / NBRC 100126 / VC-16).